We begin with the raw amino-acid sequence, 505 residues long: Light-independent protochlorophyllide reductase subunit B (505 aa).

Residue Asp-36 coordinates [4Fe-4S] cluster. Asp-291 acts as the Proton donor in catalysis. Gly-426–Met-427 contacts substrate.

The protein belongs to the ChlB/BchB/BchZ family. Protochlorophyllide reductase is composed of three subunits; ChlL, ChlN and ChlB. Forms a heterotetramer of two ChlB and two ChlN subunits. [4Fe-4S] cluster serves as cofactor.

It catalyses the reaction chlorophyllide a + oxidized 2[4Fe-4S]-[ferredoxin] + 2 ADP + 2 phosphate = protochlorophyllide a + reduced 2[4Fe-4S]-[ferredoxin] + 2 ATP + 2 H2O. It participates in porphyrin-containing compound metabolism; chlorophyll biosynthesis (light-independent). In terms of biological role, component of the dark-operative protochlorophyllide reductase (DPOR) that uses Mg-ATP and reduced ferredoxin to reduce ring D of protochlorophyllide (Pchlide) to form chlorophyllide a (Chlide). This reaction is light-independent. The NB-protein (ChlN-ChlB) is the catalytic component of the complex. The protein is Light-independent protochlorophyllide reductase subunit B of Gloeobacter violaceus (strain ATCC 29082 / PCC 7421).